A 547-amino-acid chain; its full sequence is Tripartite motif-containing protein 5 (547 aa).

At alanine 2 the chain carries N-acetylalanine. Residues 15 to 59 (CPICLDLLTEPLSLDCGHSFCQACITADHKESTLHQGERSCPLCR) form an RING-type zinc finger. A Phosphoserine modification is found at serine 86. The segment at 91–132 (QKVDRCARHGEKLLLFCQQHGNVICWLCERSQEHRGHSTFLV) adopts a B box-type zinc-finger fold. The Zn(2+) site is built by cysteine 96, histidine 99, cysteine 118, and histidine 124. Residues 132-224 (VEEVAQKYRE…LAQSENDMVL (93 aa)) adopt a coiled-coil conformation. The required for interaction with GABARAP and for autophagy stretch occupies residues 186–199 (FKQLRDILDCEESN). Residues 280-547 (PNLKGMLQVF…LPMTLCSPSS (268 aa)) enclose the B30.2/SPRY domain.

The protein belongs to the TRIM/RBCC family. In terms of assembly, can form homodimers and homotrimers. In addition to lower-order dimerization, also exhibits a higher-order multimerization and both low- and high-order multimerizations are essential for its restriction activity. Interacts with BTBD1 and BTBD2. Interacts with PSMC4, PSMC5, PSMD7 and HSPA8/HSC70. Interacts (via B30.2/SPRY domain) with HSPA1A/B. Interacts with PSMC2, MAP3K7/TAK1, TAB2 and TAB3. Interacts with SQSTM1. Interacts with TRIM6 and TRIM34. Interacts with ULK1 (phosphorylated form), GABARAP, GABARAPL1, GABARAPL2, MAP1LC3A, MAP1LC3C and BECN1. Post-translationally, degraded in a proteasome-independent fashion in the absence of viral infection but in a proteasome-dependent fashion following exposure to restriction sensitive virus. Autoubiquitinated in a RING finger- and UBE2D2-dependent manner. Monoubiquitinated by TRIM21. Deubiquitinated by Yersinia YopJ. Ubiquitination may not lead to proteasomal degradation.

It localises to the cytoplasm. The protein localises to the nucleus. The enzyme catalyses S-ubiquitinyl-[E2 ubiquitin-conjugating enzyme]-L-cysteine + [acceptor protein]-L-lysine = [E2 ubiquitin-conjugating enzyme]-L-cysteine + N(6)-ubiquitinyl-[acceptor protein]-L-lysine.. Its pathway is protein modification; protein ubiquitination. Capsid-specific restriction factor that prevents infection from non-host-adapted retroviruses. Blocks viral replication early in the life cycle, after viral entry but before reverse transcription. In addition to acting as a capsid-specific restriction factor, also acts as a pattern recognition receptor that activates innate immune signaling in response to the retroviral capsid lattice. Binding to the viral capsid triggers its E3 ubiquitin ligase activity, and in concert with the heterodimeric ubiquitin conjugating enzyme complex UBE2V1-UBE2N (also known as UBC13-UEV1A complex) generates 'Lys-63'-linked polyubiquitin chains, which in turn are catalysts in the autophosphorylation of the MAP3K7/TAK1 complex (includes TAK1, TAB2, and TAB3). Activation of the MAP3K7/TAK1 complex by autophosphorylation results in the induction and expression of NF-kappa-B and MAPK-responsive inflammatory genes, thereby leading to an innate immune response in the infected cell. Plays a role in regulating autophagy through activation of autophagy regulator BECN1 by causing its dissociation from its inhibitors BCL2 and TAB2. The sequence is that of Tripartite motif-containing protein 5 (TRIM5) from Lagothrix lagotricha (Brown woolly monkey).